Here is a 505-residue protein sequence, read N- to C-terminus: Histidine ammonia-lyase (505 aa).

The 5-imidazolinone (Ala-Gly) cross-link spans 141-143 (ASG). Ser142 carries the post-translational modification 2,3-didehydroalanine (Ser).

This sequence belongs to the PAL/histidase family. Contains an active site 4-methylidene-imidazol-5-one (MIO), which is formed autocatalytically by cyclization and dehydration of residues Ala-Ser-Gly.

It is found in the cytoplasm. The catalysed reaction is L-histidine = trans-urocanate + NH4(+). Its pathway is amino-acid degradation; L-histidine degradation into L-glutamate; N-formimidoyl-L-glutamate from L-histidine: step 1/3. In Bacillus cereus (strain AH187), this protein is Histidine ammonia-lyase.